The primary structure comprises 295 residues: Protease HtpX (295 aa).

Transmembrane regions (helical) follow at residues 4-24 (ILLF…TLSL) and 41-61 (SSLL…SLFI). His-147 provides a ligand contact to Zn(2+). Residue Glu-148 is part of the active site. Residue His-151 coordinates Zn(2+). The next 2 helical transmembrane spans lie at 158 to 178 (VTLA…ARII) and 199 to 219 (VATI…VMWF). Position 224 (Glu-224) interacts with Zn(2+).

Belongs to the peptidase M48B family. It depends on Zn(2+) as a cofactor.

The protein resides in the cell inner membrane. The polypeptide is Protease HtpX (Pseudomonas putida (strain W619)).